The chain runs to 350 residues: S-adenosylmethionine:tRNA ribosyltransferase-isomerase (350 aa).

This sequence belongs to the QueA family. Monomer.

Its subcellular location is the cytoplasm. The catalysed reaction is 7-aminomethyl-7-carbaguanosine(34) in tRNA + S-adenosyl-L-methionine = epoxyqueuosine(34) in tRNA + adenine + L-methionine + 2 H(+). The protein operates within tRNA modification; tRNA-queuosine biosynthesis. In terms of biological role, transfers and isomerizes the ribose moiety from AdoMet to the 7-aminomethyl group of 7-deazaguanine (preQ1-tRNA) to give epoxyqueuosine (oQ-tRNA). In Bacillus thuringiensis subsp. konkukian (strain 97-27), this protein is S-adenosylmethionine:tRNA ribosyltransferase-isomerase.